The chain runs to 918 residues: MKVSWPGENHWQVGPAVVESPAVGAPQVGGLPDVVPEGTLLNMVLKRMHRPRCCSYQLVFEHRRPSCIQGLRWTPLTNSEDSLDFRVSLEQATTEHVHKAGKLLHRHLLATYPTLIRDRKYHLRLYRHCCSGRELVDGILALGLGVHSRSQAVGICQVLLDEGALCHVKHDWTFQDRDAQFYRFPGPEPEPTGTQDVEEELVEAMALLSQRGPDALLTVALRKPPGQRTDEELDLIFEELLHIKAVAHLSNSVKRELAAVLLFEPHSKAGTVLFSQGDKGTSWYIIWKGSVNVVTHGKGLVTTLHEGDDFGQLALVNDAPRAATIILRENNCHFLRVDKQDFNRIIKDVEAKTMRLEEHGKVVLVLERTSQGAGPSRPPTPGRNRYTVMSGTPEKILELLLEAMRPDSSAHDPTETFLSDFLLTHSVFMPSTQLFTALLHHFHVEPADPAGGSEQEHSTYICNKRQQILRLVGRWVALYSPMLHSDPVATSFLQKLSDLVSRDARLSNLLREQYPERRRHHRLENGCGNVSPQTKARNAPVWLPNQEEPLPSSAGAIRVGDKVPYDICRPDHSVLTLHLPVTASVREVMAALAHEDHWTKGQVLVKVNSAGDVVGLQPDARGVATSLGLNERLFVVDPQEVHELTPHPEQLGPTLGSSEMLDLVSAKDLAGQLTDHDWNLFNRIHQVQEHLRDVTTANLERFMRRFNELQYWVATELCLCPVPGSRAQLLRKFIKLAAHLKEQKNLNSFFAVMFGLSNSAISRLAHTWERLPHKVRKLYSALERLLDPSWNHRVYRLALTKLSPPVIPFMPLLLKDVTFIHEGNHTLVENLINFEKMRMMARAVRMLHHCRSHSTAPLSPLRSRVSHIHEDSQGSRISTCSEQSLSTRSPASTWAYVQQLKVIDNQRELSRLSRELEP.

At S79 the chain carries Phosphoserine. Positions 110-186 (ATYPTLIRDR…RDAQFYRFPG (77 aa)) constitute a DEP domain. The interval 218–242 (TVALRKPPGQRTDEELDLIFEELLH) is interaction with PDE3B. 3',5'-cyclic AMP contacts are provided by residues 311–314 (GQLA) and 321–322 (RA). The interval 369–388 (TSQGAGPSRPPTPGRNRYTV) is disordered. The 138-residue stretch at 384-521 (NRYTVMSGTP…EQYPERRRHH (138 aa)) folds into the N-terminal Ras-GEF domain. Residues 398 to 422 (ELLLEAMRPDSSAHDPTETFLSDFL) are interaction with PDE3B. Residues S531 and S859 each carry the phosphoserine modification. The Ras-GEF domain occupies 665 to 884 (SAKDLAGQLT…SRISTCSEQS (220 aa)).

In terms of assembly, interacts with PDE3B and PIK3R6; form a signaling complex that regulates phosphatidylinositol 3-kinase gamma in angiogenesis.

The protein localises to the cytoplasm. It is found in the membrane. Its function is as follows. Guanine nucleotide exchange factor (GEF) for RAP1A and RAP2A small GTPases that is activated by binding cAMP. Through simultaneous binding of PDE3B to RAPGEF3 and PIK3R6 is assembled in a signaling complex in which it activates the PI3K gamma complex and which is involved in angiogenesis. Plays a role in the modulation of the cAMP-induced dynamic control of endothelial barrier function through a pathway that is independent on Rho-mediated signaling. Required for the actin rearrangement at cell-cell junctions, such as stress fibers and junctional actin. In Mus musculus (Mouse), this protein is Rap guanine nucleotide exchange factor 3 (Rapgef3).